Here is a 97-residue protein sequence, read N- to C-terminus: Large ribosomal subunit protein eL30 (97 aa).

This sequence belongs to the eukaryotic ribosomal protein eL30 family.

This Methanoregula boonei (strain DSM 21154 / JCM 14090 / 6A8) protein is Large ribosomal subunit protein eL30.